A 382-amino-acid chain; its full sequence is Succinate--CoA ligase [ADP-forming] subunit beta (382 aa).

The 229-residue stretch at 9–237 (KQVFADAGIP…AAEGDELEQK (229 aa)) folds into the ATP-grasp domain. ATP contacts are provided by residues lysine 45, 52–54 (GRG), glutamate 91, valine 94, and glutamate 99. Mg(2+) contacts are provided by asparagine 191 and aspartate 205. Substrate is bound by residues asparagine 257 and 314-316 (GIT).

The protein belongs to the succinate/malate CoA ligase beta subunit family. In terms of assembly, heterotetramer of two alpha and two beta subunits. The cofactor is Mg(2+).

The enzyme catalyses succinate + ATP + CoA = succinyl-CoA + ADP + phosphate. It catalyses the reaction GTP + succinate + CoA = succinyl-CoA + GDP + phosphate. The protein operates within carbohydrate metabolism; tricarboxylic acid cycle; succinate from succinyl-CoA (ligase route): step 1/1. Its function is as follows. Succinyl-CoA synthetase functions in the citric acid cycle (TCA), coupling the hydrolysis of succinyl-CoA to the synthesis of either ATP or GTP and thus represents the only step of substrate-level phosphorylation in the TCA. The beta subunit provides nucleotide specificity of the enzyme and binds the substrate succinate, while the binding sites for coenzyme A and phosphate are found in the alpha subunit. The protein is Succinate--CoA ligase [ADP-forming] subunit beta of Haloarcula marismortui (strain ATCC 43049 / DSM 3752 / JCM 8966 / VKM B-1809) (Halobacterium marismortui).